The primary structure comprises 449 residues: Asparagine--tRNA ligase (449 aa).

Belongs to the class-II aminoacyl-tRNA synthetase family. As to quaternary structure, homodimer.

The protein resides in the cytoplasm. The catalysed reaction is tRNA(Asn) + L-asparagine + ATP = L-asparaginyl-tRNA(Asn) + AMP + diphosphate + H(+). The protein is Asparagine--tRNA ligase of Mesomycoplasma hyopneumoniae (strain J / ATCC 25934 / NCTC 10110) (Mycoplasma hyopneumoniae).